A 150-amino-acid polypeptide reads, in one-letter code: Monooxygenase dmxR10 (150 aa).

Belongs to the avfA family.

It functions in the pathway secondary metabolite biosynthesis. Its function is as follows. Monooxygenase; part of the gene cluster that mediates the biosynthesis of the dimeric xanthones cryptosporioptides. The pathway begins with the synthesis of atrochrysone thioester by the polyketide synthase dmx-nrPKS. The atrochrysone carboxyl ACP thioesterase dmxR1 then breaks the thioester bond and releases the atrochrysone carboxylic acid from dmx-nrPKS. Atrochrysone carboxylic acid is decarboxylated by the decarboxylase dmxR15, and oxidized by the anthrone oxygenase dmxR16 to yield emodin. Emodin is then reduced to emodin hydroquinone by the oxidoreductase dmxR7. A-ring reduction by the short chain dehydrogenase dmxR18, dehydration by the scytalone dehydratase-like protein dmxR17 and probable spontaneous re-oxidation, results in overall deoxygenation to chrysophanol. Baeyer-Villiger oxidation by the Baeyer-Villiger monooxygenase (BVMO) dmxR6 then yields monodictylactone in equilibrium with monodictyphenone. In the case of the cryptosporioptides biosynthesis, monodictylactone is reduced at C-12 to an alcohol (by the short chain dehydrogenases dmxR12 or dmxR8) and hydroxylated at C-5 by dmxR9, yielding the electron-rich aromatic which could eliminate H(2)O to form the ortho-quinonemethide, followed by tautomerisation to paraquinone and complete the formal reduction to produce the 10-methylgroup. Conjugate addition of C-4a-OH to the resulting paraquinone by the monooxygenase dmxR10 then gives cyclohexadienone, which is then reduced at C-5 by the short chain dehydrogenase dmxR3 to give the dihydroxanthone. The 6,7-epoxide in the cryptosporioptides could be introduced by the cytochrome P450 monooxygenase dmxL3. The highly reducing PKS dmxL2 manufactures butyrate, which is further carboxylated by dmxL1 to form ethylmalonate. It is not yet clear whether the carboxylation occurs while the butyrate is attached to the ACP of dmxL2, but this unusual fungal metabolite could then be esterified to O-5 by the O-acetyltransferase dmxR13. Finally, dimerization performed by dmxR5 gives the observed dimers cryptosporioptides A, B and C as the final products of the pathway. This chain is Monooxygenase dmxR10, found in Cryptosporiopsis sp. (strain 8999).